We begin with the raw amino-acid sequence, 145 residues long: Large ribosomal subunit protein uL13 (145 aa).

Belongs to the universal ribosomal protein uL13 family. In terms of assembly, part of the 50S ribosomal subunit.

This protein is one of the early assembly proteins of the 50S ribosomal subunit, although it is not seen to bind rRNA by itself. It is important during the early stages of 50S assembly. This Macrococcus caseolyticus (strain JCSC5402) (Macrococcoides caseolyticum) protein is Large ribosomal subunit protein uL13.